The primary structure comprises 260 residues: Thrombin-like enzyme 2 (260 aa).

The first 18 residues, 1 to 18, serve as a signal peptide directing secretion; sequence MMLIRVLANLLILQLSYA. Positions 19–24 are excised as a propeptide; sequence QKSSEL. The region spanning 25–251 is the Peptidase S1 domain; it reads VIGGDECNIN…HLDWIQSIIA (227 aa). Cystine bridges form between cysteine 31–cysteine 165, cysteine 52–cysteine 68, cysteine 102–cysteine 258, cysteine 144–cysteine 212, cysteine 176–cysteine 191, and cysteine 202–cysteine 227. Catalysis depends on histidine 67, which acts as the Charge relay system. A glycan (N-linked (GlcNAc...) asparagine) is linked at asparagine 105. Aspartate 112 (charge relay system) is an active-site residue. N-linked (GlcNAc...) asparagine glycans are attached at residues asparagine 156 and asparagine 172. Serine 206 acts as the Charge relay system in catalysis. An N-linked (GlcNAc...) asparagine glycan is attached at asparagine 253.

It belongs to the peptidase S1 family. Snake venom subfamily. Monomer. Expressed by the venom gland.

It localises to the secreted. Functionally, thrombin-like snake venom serine protease. This chain is Thrombin-like enzyme 2, found in Trimeresurus albolabris (White-lipped pit viper).